Consider the following 351-residue polypeptide: Protein-glutamate methylesterase/protein-glutamine glutaminase 2 (351 aa).

Residues 4 to 121 form the Response regulatory domain; sequence KVLVVDDSAL…PQDFNEYQDL (118 aa). D55 carries the 4-aspartylphosphate modification. The CheB-type methylesterase domain occupies 156-348; that stretch reads RVINTQLVAI…DKMLNYLASL (193 aa). Active-site residues include S168, H194, and D290.

This sequence belongs to the CheB family. In terms of processing, phosphorylated by CheA. Phosphorylation of the N-terminal regulatory domain activates the methylesterase activity.

It localises to the cytoplasm. It carries out the reaction [protein]-L-glutamate 5-O-methyl ester + H2O = L-glutamyl-[protein] + methanol + H(+). The catalysed reaction is L-glutaminyl-[protein] + H2O = L-glutamyl-[protein] + NH4(+). Its function is as follows. Involved in chemotaxis. Part of a chemotaxis signal transduction system that modulates chemotaxis in response to various stimuli. Catalyzes the demethylation of specific methylglutamate residues introduced into the chemoreceptors (methyl-accepting chemotaxis proteins or MCP) by CheR. Also mediates the irreversible deamidation of specific glutamine residues to glutamic acid. This is Protein-glutamate methylesterase/protein-glutamine glutaminase 2 from Shewanella sp. (strain MR-7).